We begin with the raw amino-acid sequence, 368 residues long: 3-dehydroquinate synthase (368 aa).

NAD(+) contacts are provided by residues 99–103 (GVVGD), 123–124 (TT), Lys136, and Lys145. Zn(2+) is bound by residues Glu178, His242, and His259.

This sequence belongs to the sugar phosphate cyclases superfamily. Dehydroquinate synthase family. NAD(+) is required as a cofactor. It depends on Co(2+) as a cofactor. The cofactor is Zn(2+).

The protein localises to the cytoplasm. The enzyme catalyses 7-phospho-2-dehydro-3-deoxy-D-arabino-heptonate = 3-dehydroquinate + phosphate. It participates in metabolic intermediate biosynthesis; chorismate biosynthesis; chorismate from D-erythrose 4-phosphate and phosphoenolpyruvate: step 2/7. In terms of biological role, catalyzes the conversion of 3-deoxy-D-arabino-heptulosonate 7-phosphate (DAHP) to dehydroquinate (DHQ). In Chlorobaculum tepidum (strain ATCC 49652 / DSM 12025 / NBRC 103806 / TLS) (Chlorobium tepidum), this protein is 3-dehydroquinate synthase.